The sequence spans 630 residues: Polyphenol oxidase A, chloroplastic (630 aa).

Residues M1–S25 are disordered. The transit peptide at M1 to A87 directs the protein to the chloroplast. Disulfide bonds link C98-C114 and C113-C181. 6 residues coordinate Cu cation: H180, H198, H207, H328, H332, and H370. The 2'-(S-cysteinyl)-histidine (Cys-His) cross-link spans C184–H198.

The protein belongs to the tyrosinase family. Requires Cu(2+) as cofactor.

The protein resides in the plastid. It is found in the chloroplast thylakoid lumen. It carries out the reaction 2 catechol + O2 = 2 1,2-benzoquinone + 2 H2O. Functionally, catalyzes the oxidation of mono- and o-diphenols to o-diquinones. The chain is Polyphenol oxidase A, chloroplastic from Solanum lycopersicum (Tomato).